Reading from the N-terminus, the 277-residue chain is Pantothenate synthetase (277 aa).

Met26–His33 is an ATP binding site. His33 (proton donor) is an active-site residue. Gln57 is a binding site for (R)-pantoate. Gln57 contributes to the beta-alanine binding site. An ATP-binding site is contributed by Gly144–Asp147. Gln150 serves as a coordination point for (R)-pantoate. Residues Gly173 and Leu181–Arg184 contribute to the ATP site.

The protein belongs to the pantothenate synthetase family. In terms of assembly, homodimer.

The protein resides in the cytoplasm. It carries out the reaction (R)-pantoate + beta-alanine + ATP = (R)-pantothenate + AMP + diphosphate + H(+). The protein operates within cofactor biosynthesis; (R)-pantothenate biosynthesis; (R)-pantothenate from (R)-pantoate and beta-alanine: step 1/1. Its function is as follows. Catalyzes the condensation of pantoate with beta-alanine in an ATP-dependent reaction via a pantoyl-adenylate intermediate. The polypeptide is Pantothenate synthetase (Chromobacterium violaceum (strain ATCC 12472 / DSM 30191 / JCM 1249 / CCUG 213 / NBRC 12614 / NCIMB 9131 / NCTC 9757 / MK)).